A 55-amino-acid polypeptide reads, in one-letter code: Protein CADMIUM TOLERANCE 1 (55 aa).

A helical membrane pass occupies residues 24-40 (GCLYACIFTALCCFCCY).

This sequence belongs to the CYSTM1 family.

It localises to the cell membrane. The protein resides in the secreted. It is found in the cell wall. In terms of biological role, confers resistance to heavy metal ions (e.g. cadmium (CdCl(2)) and copper (CuCl(2))) by chelating them at the plasma membrane of root cells, thus stopping their entry and reducing their accumulation. This chain is Protein CADMIUM TOLERANCE 1, found in Digitaria ciliaris (Southern crabgrass).